Reading from the N-terminus, the 815-residue chain is Lon protease 1 (815 aa).

One can recognise a Lon N-terminal domain in the interval 19–212 (MPLLPLRDIV…KLFGQIRSEI (194 aa)). An ATP-binding site is contributed by 364 to 371 (GPPGVGKT). The region spanning 601–782 (KDEIGLAVGL…DDVLRKAMVV (182 aa)) is the Lon proteolytic domain. Residues S688 and K731 contribute to the active site. Positions 793-815 (EAGAQQAVMFEQKPPAADEIRAH) are disordered.

Belongs to the peptidase S16 family. Homohexamer. Organized in a ring with a central cavity.

It localises to the cytoplasm. It catalyses the reaction Hydrolysis of proteins in presence of ATP.. ATP-dependent serine protease that mediates the selective degradation of mutant and abnormal proteins as well as certain short-lived regulatory proteins. Required for cellular homeostasis and for survival from DNA damage and developmental changes induced by stress. Degrades polypeptides processively to yield small peptide fragments that are 5 to 10 amino acids long. Binds to DNA in a double-stranded, site-specific manner. The chain is Lon protease 1 from Syntrophobacter fumaroxidans (strain DSM 10017 / MPOB).